The primary structure comprises 484 residues: tRNA sulfurtransferase (484 aa).

The 105-residue stretch at 63-167 (QAFGERLACI…GDKLYMVTKR (105 aa)) folds into the THUMP domain. ATP is bound by residues 185–186 (LI), Lys-267, Gly-289, and Gln-298. An intrachain disulfide couples Cys-346 to Cys-458. Residues 406–484 (IDTNEVVIDI…GYHNVKVYRP (79 aa)) enclose the Rhodanese domain. The active-site Cysteine persulfide intermediate is the Cys-458.

Belongs to the ThiI family.

The protein localises to the cytoplasm. It carries out the reaction [ThiI sulfur-carrier protein]-S-sulfanyl-L-cysteine + a uridine in tRNA + 2 reduced [2Fe-2S]-[ferredoxin] + ATP + H(+) = [ThiI sulfur-carrier protein]-L-cysteine + a 4-thiouridine in tRNA + 2 oxidized [2Fe-2S]-[ferredoxin] + AMP + diphosphate. The enzyme catalyses [ThiS sulfur-carrier protein]-C-terminal Gly-Gly-AMP + S-sulfanyl-L-cysteinyl-[cysteine desulfurase] + AH2 = [ThiS sulfur-carrier protein]-C-terminal-Gly-aminoethanethioate + L-cysteinyl-[cysteine desulfurase] + A + AMP + 2 H(+). The protein operates within cofactor biosynthesis; thiamine diphosphate biosynthesis. Functionally, catalyzes the ATP-dependent transfer of a sulfur to tRNA to produce 4-thiouridine in position 8 of tRNAs, which functions as a near-UV photosensor. Also catalyzes the transfer of sulfur to the sulfur carrier protein ThiS, forming ThiS-thiocarboxylate. This is a step in the synthesis of thiazole, in the thiamine biosynthesis pathway. The sulfur is donated as persulfide by IscS. The sequence is that of tRNA sulfurtransferase from Shewanella sp. (strain MR-7).